The following is a 507-amino-acid chain: uncharacterized protein (507 aa).

12 consecutive transmembrane segments (helical) span residues 11–31 (ILCF…IFPI), 97–117 (AWIA…YGHL), 125–145 (PVSF…GFAP), 149–169 (VFAV…IVFY), 187–207 (FFNW…CGYW), 209–229 (SAAI…LWLP), 283–303 (LFSS…WFST), 326–346 (FVQA…DLFI), 354–374 (LHQV…ALMI), 388–408 (LAII…WDAC), 423–443 (IGIG…PQMA), and 452–472 (IPYI…CFFL).

This sequence belongs to the major facilitator superfamily.

It localises to the membrane. This is an uncharacterized protein from Caenorhabditis elegans.